The chain runs to 362 residues: Alanine racemase (362 aa).

Lys-33 functions as the Proton acceptor; specific for D-alanine in the catalytic mechanism. The residue at position 33 (Lys-33) is an N6-(pyridoxal phosphate)lysine. Residue Arg-129 coordinates substrate. Tyr-254 functions as the Proton acceptor; specific for L-alanine in the catalytic mechanism. Residue Met-302 participates in substrate binding.

It belongs to the alanine racemase family. It depends on pyridoxal 5'-phosphate as a cofactor.

The catalysed reaction is L-alanine = D-alanine. It participates in amino-acid biosynthesis; D-alanine biosynthesis; D-alanine from L-alanine: step 1/1. Functionally, catalyzes the interconversion of L-alanine and D-alanine. May also act on other amino acids. The chain is Alanine racemase (alr) from Xylella fastidiosa (strain 9a5c).